The primary structure comprises 561 residues: Potassium-transporting ATPase potassium-binding subunit (561 aa).

11 helical membrane-spanning segments follow: residues 5 to 25 (IELF…GTYM), 63 to 83 (KYAL…YFIL), 103 to 122 (LAFN…HYAG), 133 to 153 (IVIV…AAAI), 179 to 199 (LLPI…PQTF), 255 to 275 (IEML…GLMI), 281 to 301 (ALVL…GAVY), 380 to 400 (AGLQ…GLMV), 418 to 438 (LIAL…ALTV), 485 to 505 (IMTG…MLAV), and 531 to 551 (AIFI…AVIL).

It belongs to the KdpA family. In terms of assembly, the system is composed of three essential subunits: KdpA, KdpB and KdpC.

The protein resides in the cell membrane. Part of the high-affinity ATP-driven potassium transport (or Kdp) system, which catalyzes the hydrolysis of ATP coupled with the electrogenic transport of potassium into the cytoplasm. This subunit binds the extracellular potassium ions and delivers the ions to the membrane domain of KdpB through an intramembrane tunnel. This is Potassium-transporting ATPase potassium-binding subunit from Caldanaerobacter subterraneus subsp. tengcongensis (strain DSM 15242 / JCM 11007 / NBRC 100824 / MB4) (Thermoanaerobacter tengcongensis).